We begin with the raw amino-acid sequence, 252 residues long: dITP/XTP pyrophosphatase (252 aa).

Position 7–12 (7–12 (THNEGK)) interacts with substrate. Asp-74 serves as the catalytic Proton acceptor. Mg(2+) is bound at residue Asp-74. Substrate-binding positions include Ser-75 and 193–196 (FGYD). A disordered region spans residues 201–224 (PDDQPAGRVSTEPDHEGEPLTSAE). Residues Lys-230 and 235–236 (HR) each bind substrate.

Belongs to the HAM1 NTPase family. In terms of assembly, homodimer. Mg(2+) serves as cofactor.

The enzyme catalyses XTP + H2O = XMP + diphosphate + H(+). It carries out the reaction dITP + H2O = dIMP + diphosphate + H(+). The catalysed reaction is ITP + H2O = IMP + diphosphate + H(+). Its function is as follows. Pyrophosphatase that catalyzes the hydrolysis of nucleoside triphosphates to their monophosphate derivatives, with a high preference for the non-canonical purine nucleotides XTP (xanthosine triphosphate), dITP (deoxyinosine triphosphate) and ITP. Seems to function as a house-cleaning enzyme that removes non-canonical purine nucleotides from the nucleotide pool, thus preventing their incorporation into DNA/RNA and avoiding chromosomal lesions. The polypeptide is dITP/XTP pyrophosphatase (Bifidobacterium longum subsp. infantis (strain ATCC 15697 / DSM 20088 / JCM 1222 / NCTC 11817 / S12)).